The following is a 287-amino-acid chain: Urease accessory protein UreD (287 aa).

It belongs to the UreD family. As to quaternary structure, ureD, UreF and UreG form a complex that acts as a GTP-hydrolysis-dependent molecular chaperone, activating the urease apoprotein by helping to assemble the nickel containing metallocenter of UreC. The UreE protein probably delivers the nickel.

It localises to the cytoplasm. Its function is as follows. Required for maturation of urease via the functional incorporation of the urease nickel metallocenter. The chain is Urease accessory protein UreD from Herpetosiphon aurantiacus (strain ATCC 23779 / DSM 785 / 114-95).